The following is a 1028-amino-acid chain: Exportin-T (1028 aa).

It belongs to the exportin family.

It is found in the nucleus. The protein resides in the cytoplasm. Functionally, tRNA nucleus export receptor which facilitates tRNA translocation across the nuclear pore complex. Involved in pre-tRNA splicing, probably by affecting the interaction of pre-tRNA with splicing endonuclease. In Aspergillus terreus (strain NIH 2624 / FGSC A1156), this protein is Exportin-T (los1).